The chain runs to 249 residues: 2,3-bisphosphoglycerate-dependent phosphoglycerate mutase 2 (249 aa).

Residues 8–15, 21–22, arginine 60, 87–90, lysine 98, 114–115, and 183–184 contribute to the substrate site; these read RHGESIWN, TG, ERHY, RR, and GN. The active-site Tele-phosphohistidine intermediate is the histidine 9. The active-site Proton donor/acceptor is the glutamate 87.

It belongs to the phosphoglycerate mutase family. BPG-dependent PGAM subfamily. In terms of assembly, homodimer.

It carries out the reaction (2R)-2-phosphoglycerate = (2R)-3-phosphoglycerate. The protein operates within carbohydrate degradation; glycolysis; pyruvate from D-glyceraldehyde 3-phosphate: step 3/5. In terms of biological role, catalyzes the interconversion of 2-phosphoglycerate and 3-phosphoglycerate. The polypeptide is 2,3-bisphosphoglycerate-dependent phosphoglycerate mutase 2 (Nitrosomonas europaea (strain ATCC 19718 / CIP 103999 / KCTC 2705 / NBRC 14298)).